We begin with the raw amino-acid sequence, 607 residues long: MNLQEMNARKEKIRNFSIIAHIDHGKSTLADRILEQTETVSKREMQAQLLDSMDLERERGITIKLNAIELNYKAKDGETYIFHLIDTPGHVDFTYEVSRSLAACEGAILVVDAAQGIEAQTLANVYLALDNDLEILPVINKIDLPAADPEMVRQEIEDVIGLDASEAVLASAKAGIGIEEILEQIVEKVPAPQGEVDAPLKALIFDSVYDAYRGVILQIRVIDGSVKVGDRIQLMSNGKEFDVTEVGIFTPKAVARDFLMAGDVGYVAAAIKTVADTRVGDTVTLASNPATEALEGYKEMNPMVFAGIYPIESNKFNDLREALEKLQLNDASLRFEPETSQALGFGFRCGFLGLLHMDVIQERLEREFGIDLIMTAPSVVYHINTTDGETLEVANPSEFPDPTRIENIEEPFVKAQIMVPNDFVGPVMELAQRKRGIFLTMDYLDANRVNIIYHIPLSEIVFDFFDKLKSSTKGYASFDYEISDYRPSNLVKMDILLNAEKVDALSFIVHKDFAFERGKVIVEKLKKLIPRQQFEVPIQATIGNKIVARSDIKALRKNVLAKCYGGDISRKRKLLEKQKAGKKRMKAIGSVEVPQEAFLSVLSMDEE.

One can recognise a tr-type G domain in the interval 11–193 (EKIRNFSIIA…QIVEKVPAPQ (183 aa)). GTP contacts are provided by residues 23–28 (DHGKST) and 140–143 (NKID).

This sequence belongs to the TRAFAC class translation factor GTPase superfamily. Classic translation factor GTPase family. LepA subfamily.

It is found in the cell membrane. It carries out the reaction GTP + H2O = GDP + phosphate + H(+). Functionally, required for accurate and efficient protein synthesis under certain stress conditions. May act as a fidelity factor of the translation reaction, by catalyzing a one-codon backward translocation of tRNAs on improperly translocated ribosomes. Back-translocation proceeds from a post-translocation (POST) complex to a pre-translocation (PRE) complex, thus giving elongation factor G a second chance to translocate the tRNAs correctly. Binds to ribosomes in a GTP-dependent manner. This chain is Elongation factor 4, found in Lactococcus lactis subsp. cremoris (strain SK11).